Reading from the N-terminus, the 525-residue chain is Vesicular inhibitory amino acid transporter (525 aa).

Topologically, residues 1 to 132 are cytoplasmic; the sequence is MATLLRSKLS…WNVTNAIQGM (132 aa). The segment at 69–111 is disordered; the sequence is PCGDEGAEPPVEGDIHYQRGSGAPLPPSGSKDQVGAGGEFGGH. A helical membrane pass occupies residues 133–153; it reads FVLGLPYAILHGGYLGLFLII. At 154 to 204 the chain is on the lumenal, vesicle side; the sequence is FAAVVCCYTGKILIACLYEENEDGEVVRVRDSYVAIANACCAPRFPTLGGR. Tyr186 is modified (3'-nitrotyrosine). A helical membrane pass occupies residues 205-225; the sequence is VVNVAQIIELVMTCILYVVVS. Over 226-265 the chain is Cytoplasmic; that stretch reads GNLMYNSFPGLPVSQKSWSIIATAVLLPCAFLKNLKAVSK. A helical membrane pass occupies residues 266–286; sequence FSLLCTLAHFVINILVIAYCL. Residues 287-305 lie on the Lumenal, vesicle side of the membrane; sequence SRARDWAWEKVKFYIDVKK. A helical transmembrane segment spans residues 306-326; the sequence is FPISIGIIVFSYTSQIFLPSL. At 327–341 the chain is on the cytoplasmic side; it reads EGNMQQPSEFHCMMN. Residues 342–362 form a helical membrane-spanning segment; that stretch reads WTHIAACVLKGLFALVAYLTW. Over 363-383 the chain is Lumenal, vesicle; the sequence is ADETKEVITDNLPGSIRAVVN. The chain crosses the membrane as a helical span at residues 384–404; the sequence is IFLVAKALLSYPLPFFAAVEV. The Cytoplasmic portion of the chain corresponds to 405–438; that stretch reads LEKSLFQEGSRAFFPACYGGDGRLKSWGLTLRCA. The helical transmembrane segment at 439 to 459 threads the bilayer; the sequence is LVVFTLLMAIYVPHFALLMGL. Topologically, residues 460–461 are lumenal, vesicle; the sequence is TG. Residues 462–482 form a helical membrane-spanning segment; it reads SLTGAGLCFLLPSLFHLRLLW. The Cytoplasmic segment spans residues 483–489; sequence RKLLWHQ. A helical transmembrane segment spans residues 490–510; that stretch reads VFFDVAIFVIGGICSVSGFVH. Residues 511–525 are Lumenal, vesicle-facing; sequence SLEGLIEAYRTNAED.

It belongs to the amino acid/polyamine transporter 2 family.

It localises to the cytoplasmic vesicle membrane. The protein resides in the presynapse. It catalyses the reaction 4-aminobutanoate(out) + n H(+)(in) = 4-aminobutanoate(in) + n H(+)(out). It carries out the reaction glycine(out) + n H(+)(in) = glycine(in) + n H(+)(out). The catalysed reaction is beta-alanine(out) + n H(+)(in) = beta-alanine(in) + n H(+)(out). Its function is as follows. Antiporter that exchanges vesicular protons for cytosolic 4-aminobutanoate or to a lesser extend glycine, thus allowing their secretion from nerve terminals. The transport is equally dependent on the chemical and electrical components of the proton gradient. May also transport beta-alanine. Acidification of GABAergic synaptic vesicles is a prerequisite for 4-aminobutanoate uptake. The protein is Vesicular inhibitory amino acid transporter of Macaca fascicularis (Crab-eating macaque).